Consider the following 92-residue polypeptide: Acylphosphatase (92 aa).

Positions 5-92 constitute an Acylphosphatase-like domain; sequence RWHLLVSGKV…QEFTDFRTTH (88 aa). Residues R20 and N38 contribute to the active site.

It belongs to the acylphosphatase family.

It catalyses the reaction an acyl phosphate + H2O = a carboxylate + phosphate + H(+). The chain is Acylphosphatase (acyP) from Marinobacter nauticus (strain ATCC 700491 / DSM 11845 / VT8) (Marinobacter aquaeolei).